The primary structure comprises 288 residues: MTQHFIVIGNPIAHSKSPEIHTLFGAHAGLDICYQCQYCPDDPASFTAVIEAFFHGGGVGANVTVPFKQVAYECCAARGGLSEHAKIAGAVNTLSLNQALLASGVSRAEALYGDNTDGQGLVNHMQRLGWPLNGARIAIIGAGGAARGVVLPLIEAGIEALTIANRTLSKATELVNELSTASVVIHNQQIQTCCTADLSGDFDIIVNATSIGLSGETLPLADELNCQYAYDMMYGRELPFLQHFAARGAQTSDGYGMLIGQAALSFECWTGHAIDVTQATAALEKSSI.

Shikimate-binding positions include 15–17 (SKS) and Thr-64. Residue Lys-68 is the Proton acceptor of the active site. Glu-83 is a binding site for NADP(+). Shikimate contacts are provided by Asn-92 and Asp-117. Residues 141 to 145 (GAGGA), 165 to 170 (NRTLSK), and Met-232 contribute to the NADP(+) site. Tyr-234 provides a ligand contact to shikimate. Gly-254 contributes to the NADP(+) binding site.

It belongs to the shikimate dehydrogenase family. In terms of assembly, homodimer.

The catalysed reaction is shikimate + NADP(+) = 3-dehydroshikimate + NADPH + H(+). It participates in metabolic intermediate biosynthesis; chorismate biosynthesis; chorismate from D-erythrose 4-phosphate and phosphoenolpyruvate: step 4/7. Functionally, involved in the biosynthesis of the chorismate, which leads to the biosynthesis of aromatic amino acids. Catalyzes the reversible NADPH linked reduction of 3-dehydroshikimate (DHSA) to yield shikimate (SA). This Psychrobacter arcticus (strain DSM 17307 / VKM B-2377 / 273-4) protein is Shikimate dehydrogenase (NADP(+)).